Here is an 858-residue protein sequence, read N- to C-terminus: MGLIKKIFGTHSEREIKLIRPTADKIEALEPDMMKLSDDELRGKTIEFKNRLKNGETLDDILVEAYAVVREAAKRTLGNRAYYVQLLGGIILHQGRISEMRTGEGKTLTSTFPAYLNALEGEGVHIVTVNDYLAKRDAEWMGEVHRFLGLSVGCILNDMDNDERRKAYNCDITYATNNELGFDYLRDNMVIYKEQLVMRDLHFAIIDEVDSVLIDEARTPLIISGQSGKSTRLYEACDILARQLTKGTAKELSKMDIIMKEDDQETGDFVVNEKEKAVNLTAEGVEKVERFFKIENLADPENLEIQHNIILALRAHYLMAIDKDYVVKDDEVLIVDDFTGRIMPGRRYSDGLHQAIEAKEHVKVKRESKTLATITFQNFFNKYTKKCGMTGTALTEENEFREIYGMDVVEVPTNRPVARIDKDDAVYRTKREKLNAVINAIVEAHKAGQPVLVGTITIEASEEISELLKKKNIPHKVLNAKFHELEAEIIADAGQKGAVTIATNMAGRGTDIKLGEGVTELGGLKIIGTERHESRRIDNQLRGRSGRQGDPGESCFYICLEDDLMRLFGSERLNTIFKSLGLPEGEQIEHKMLSGAIEKAQKKIEDNNFGIRKNLLEYDKVNNEQREIIYAERRKVLNGDSMRDVIFKMITDNVETCVNTSISDDQLPEEWDLAELNQMLLPIIPMEPVELKDNELRHMKRNELIHMLKEKAVKLYEEKEAEFPEKEHLREVERVVLLRVIDRKWMDHIDDMDQLRQGIGLQAYGQRDPKTEYKFSGFEMFDTMINAITEDTVKALMHVRIEQKVEREEVAKVTGTNRDESVAKAPVKRATKKVQPNDPCPCGSGKKYKHCCGGVGRI.

ATP-binding positions include glutamine 85, 103 to 107, and aspartate 511; that span reads GEGKT. Residues cysteine 840, cysteine 842, cysteine 851, and cysteine 852 each coordinate Zn(2+).

Belongs to the SecA family. In terms of assembly, monomer and homodimer. Part of the essential Sec protein translocation apparatus which comprises SecA, SecYEG and auxiliary proteins SecDF. Other proteins may also be involved. Requires Zn(2+) as cofactor.

It is found in the cell membrane. Its subcellular location is the cytoplasm. The catalysed reaction is ATP + H2O + cellular proteinSide 1 = ADP + phosphate + cellular proteinSide 2.. In terms of biological role, part of the Sec protein translocase complex. Interacts with the SecYEG preprotein conducting channel. Has a central role in coupling the hydrolysis of ATP to the transfer of proteins into and across the cell membrane, serving as an ATP-driven molecular motor driving the stepwise translocation of polypeptide chains across the membrane. The polypeptide is Protein translocase subunit SecA (Lachnoclostridium phytofermentans (strain ATCC 700394 / DSM 18823 / ISDg) (Clostridium phytofermentans)).